The primary structure comprises 90 residues: MAKGQSLQDPFLNALRRERVPVSIYLVNGIKLQGQVESFDQFVILLKNTVSQMVYKHAISTVVPARPFNVTGHQNAQGGYGPQDDVPSGE.

Residues 9-68 (DPFLNALRRERVPVSIYLVNGIKLQGQVESFDQFVILLKNTVSQMVYKHAISTVVPARPF) enclose the Sm domain. The interval 71 to 90 (TGHQNAQGGYGPQDDVPSGE) is disordered.

It belongs to the Hfq family. In terms of assembly, homohexamer.

RNA chaperone that binds small regulatory RNA (sRNAs) and mRNAs to facilitate mRNA translational regulation in response to envelope stress, environmental stress and changes in metabolite concentrations. Also binds with high specificity to tRNAs. In Shewanella putrefaciens (strain CN-32 / ATCC BAA-453), this protein is RNA-binding protein Hfq.